Here is a 468-residue protein sequence, read N- to C-terminus: FAD-linked oxidoreductase azaG (468 aa).

The signal sequence occupies residues 1-16; it reads MQLSGILSWLLSWLWA. N-linked (GlcNAc...) asparagine glycosylation is present at Asn44. The FAD-binding PCMH-type domain occupies 54–228; sequence TVHGAPHYLG…TSATYRTHQA (175 aa). N-linked (GlcNAc...) asparagine glycans are attached at residues Asn272, Asn348, and Asn464.

Belongs to the oxygen-dependent FAD-linked oxidoreductase family. Requires FAD as cofactor.

The protein operates within secondary metabolite biosynthesis. In terms of biological role, FAD-linked oxidoreductase; part of the gene cluster that mediates the biosynthesis of azaphilones, a class of fungal metabolites characterized by a highly oxygenated pyrano-quinone bicyclic core and exhibiting a broad range of bioactivities. In the first step, the non-reducing polyketide synthase azaA forms the hexaketide precursor from successive condensations of five malonyl-CoA units, presumably with a simple acetyl-CoA starter unit. The reactive polyketide chain then undergoes a PT-mediated C2-C7 cyclization to afford the aromatic ring and is eventually released as an aldehyde through the R-domain. The putative ketoreductase azaE is proposed to catalyze the reduction of the terminal ketone resulting in the early culture product FK17-P2a. The monooxygenase azaH was demonstrated to be the only enzyme required to convert FK17-P2a to azanigerone E. AzaH first hydroxylates the benzaldehyde intermediate FK17-P2a at C4, which triggers the formation of the pyran-ring to afford azanigerone E. In parallel, the 2,4-dimethylhexanoyl chain is synthesized by the HR-PKS azaB and is proposed to be transferred to the C4-hydroxyl of azanigerone E by the acyltransferase azaD directly from the ACP domain of azaB. Alternatively, the 2,4-dimethyl-hexanoyl chain may be offloaded from the HR-PKS as a carboxylic acid and converted to an acyl-CoA by azaF. The resulting acyl-CoA molecule could then be taken up as a substrate by AzaD to form azanigerone B. To yield the carboxylic acid substituent in azanigerone A, the hydroxypropyl side chain of azanigerone B would need to undergo a C-C oxidative cleavage catalyzed by cytochrome P450 AzaI. AzaI is proposed to act on a vicinal diol that leads to a C-C bond scission either through an alkoxyradical intermediate or a peroxy complex. In the biosynthesis of azanigerone A, azanigerone B first undergoes hydroxylation at C10, possibly catalyzed by one of the two FAD-dependent monooxygenases encoded in the cluster, azaG or azaL, resulting in the vicinal diol azanigerone C. Oxidative cleavage of azanigerone C by azaI would yield the corresponding aldehyde derivative of azanigerone A. Finally, the dehydrogenase azaJ is proposed to convert the aldehyde functional group into the carboxylic acid, completing the conversion from azanigerone B to azanigerone A. Alternatively, the oxidation of aldehyde to carboxylic acid may be catalyzed by the same P450 enzyme azaI via consecutive oxidation or by endogenous alcohol dehydrogenase. The chain is FAD-linked oxidoreductase azaG from Aspergillus niger (strain ATCC 1015 / CBS 113.46 / FGSC A1144 / LSHB Ac4 / NCTC 3858a / NRRL 328 / USDA 3528.7).